A 284-amino-acid chain; its full sequence is MYKKIGIIYHPLNPAACDLAIKLTAKLDSLGIENWSDSAWQADKLTSKMQNTQLIFTTGGDGTILRTAHAILPLEIPILSVNLGKVGFMTELSPEDAISGLEKVLAGDGWIDERSLLEAEYLPHDSAQSRQFFVMNDAVVARGQVARVICVSVDINSQPFTTYKADGAIVSTATGSTGYSYAAGGPVLQPNSADIILTPILPHLGRGYSLVLPSDSTVDLQVNTWHEATLSIDGFINMQVSSGDTLRLRRSSKKVKFMRLRPNNYFYKELDTKLKGNNESVYDR.

The active-site Proton acceptor is the Asp61. NAD(+) contacts are provided by residues 61-62, Arg66, 136-137, Arg147, Lys164, Asp166, and Leu201; these read DG and ND.

This sequence belongs to the NAD kinase family. The cofactor is a divalent metal cation.

It is found in the cytoplasm. It catalyses the reaction NAD(+) + ATP = ADP + NADP(+) + H(+). In terms of biological role, involved in the regulation of the intracellular balance of NAD and NADP, and is a key enzyme in the biosynthesis of NADP. Catalyzes specifically the phosphorylation on 2'-hydroxyl of the adenosine moiety of NAD to yield NADP. The protein is NAD kinase of Dehalococcoides mccartyi (strain CBDB1).